Here is a 517-residue protein sequence, read N- to C-terminus: Retrotransposon-like protein 1 (517 aa).

2 disordered regions span residues 1–29 (MEVNEGQDTEGGSSRAQTLTPPPNPQQQL) and 142–161 (EEERDKRKKEEQFREADARS).

The sequence is that of Retrotransposon-like protein 1 (retr-1) from Caenorhabditis elegans.